The following is a 399-amino-acid chain: Formaldehyde dismutase (399 aa).

Cysteine 46 contributes to the Zn(2+) binding site. 47 to 51 contacts NAD(+); sequence GSDQH. Positions 67, 97, 100, 103, 111, and 170 each coordinate Zn(2+). Threonine 174 is an NAD(+) binding site. Residue histidine 177 coordinates Zn(2+). NAD(+) is bound by residues 197-198, 218-219, arginine 223, valine 263, histidine 268, proline 299, 299-301, and 336-338; these read PV, DQ, PGI, and GMA.

Belongs to the zinc-containing alcohol dehydrogenase family. In terms of assembly, homotetramer. The cofactor is Zn(2+). NAD(+) is required as a cofactor. It depends on NADH as a cofactor.

The catalysed reaction is 2 formaldehyde + H2O = methanol + formate + H(+). Inhibited by the substrate analog pyrazole but not by NAD analogs such as AMP, ADP, ATP or N-methylnicotinamide chloride. Functionally, active against a range of primary alcohols as well as some secondary alcohols. Exhibits higher activity against alcohols with longer carbon chains. The chain is Formaldehyde dismutase from Pseudomonas putida (Arthrobacter siderocapsulatus).